The sequence spans 388 residues: Cystathionine gamma-synthase (388 aa).

Residue Lys208 is modified to N6-(pyridoxal phosphate)lysine.

This sequence belongs to the trans-sulfuration enzymes family. As to quaternary structure, homotetramer. The cofactor is pyridoxal 5'-phosphate.

The protein resides in the cytoplasm. It catalyses the reaction O-succinyl-L-homoserine + L-cysteine = L,L-cystathionine + succinate + H(+). Its function is as follows. Catalyzes the formation of L-cystathionine from O-succinyl-L-homoserine (OSHS) and L-cysteine, via a gamma-replacement reaction. In the absence of thiol, catalyzes gamma-elimination to form 2-oxobutanoate, succinate and ammonia. The sequence is that of Cystathionine gamma-synthase (metB) from Mycobacterium leprae (strain TN).